Here is a 408-residue protein sequence, read N- to C-terminus: MNSIQENEHVTVFREFLKIRTDHPTPDYESSTKFLVEKAKEYNIPYEVYRETGTPIVLMKIEGLEPNLKTVLLNSHVDVVPAVHDSWKVDPFSAWKDESGNIFGRGTQDMKCVCMQFLEVARRIVQSGQKLKRTLHLSFVPDEEIGGSGKGMEKFVYTEKFRQLNIGLCLDEGLASPTNDFTVFYGERAPWWVHITAVGNAGHGSRFIEGTAIEKLMRTINKMLAFRQEQFESLHHGQHECGKKLGDVTSLNLTVLKAGIPIDHSNNFSYNVIPTQAEAGFDIRIPPTVNLDQFLDQIKEWTAEEGLSFKFASYIPKNEMTKLDSDNKWWENFKESCKKMDINLVTEIFPAATDSRFIRNLGIPAFGFSPINNTPILLHDHNEFLNEKVYLRGIDIFMGIIPNLVNME.

Position 76 (His-76) interacts with Zn(2+). Residue Asp-78 is part of the active site. Asp-109 contributes to the Zn(2+) binding site. Glu-143 serves as the catalytic Proton acceptor. Residues Glu-144, Glu-172, and His-379 each coordinate Zn(2+).

Belongs to the peptidase M20A family. Homodimer. Requires Zn(2+) as cofactor.

Its subcellular location is the cytoplasm. The enzyme catalyses an N-acyl-L-amino acid + H2O = an L-alpha-amino acid + a carboxylate. It carries out the reaction an N-acetyl-L-cysteine-S-conjugate + H2O = an S-substituted L-cysteine + acetate. Functionally, involved in the hydrolysis of N-acylated or N-acetylated amino acids (except L-aspartate). The chain is Aminoacylase-1 (acy1) from Dictyostelium discoideum (Social amoeba).